The chain runs to 508 residues: N-acetyl-D-hexosamine oxidase (508 aa).

Residues 26-203 form the FAD-binding PCMH-type domain; it reads TDAQAAGRIA…TAYTFARLPE (178 aa). A cross-link (6-(S-cysteinyl)-8alpha-(pros-histidyl)-FAD (His-Cys)) is located at residues 64-123; it reads HCYEDFVSNNPDGAIVDLSLLNAPEVRADGTVRIPAGTQNWNGYLELYKRHNLTLPGGSC.

Belongs to the oxygen-dependent FAD-linked oxidoreductase family. Requires FAD as cofactor.

The enzyme catalyses N-acetyl-D-glucosamine + O2 + H2O = N-acetyl-D-glucosaminate + H2O2 + H(+). The catalysed reaction is N-acetyl-D-galactosamine + O2 + H2O = N-acetyl-D-galactosaminate + H2O2 + H(+). It carries out the reaction N-acetyl-D-glucosamine + O2 = N-acetyl-D-glucosamino-1,5-lactone + H2O2. It catalyses the reaction N-acetyl-D-galactosamine + O2 = N-acetyl-D-galactosamino-1,5-lactone + H2O2. Functionally, catalyzes the oxidation of a range of monosaccharides in vitro, displaying the highest activity with N-acetylglucosamine (GlcNAc) and N-acetylgalactosamine (GalNAc), with a reduction of O2 to H2O2. Acts upon the C1 carbon of the GlcNAc or GalNAc molecule, producing the corresponding lactone, which can spontaneously hydrolyze. Its biological function is unclear, but its main function might be connected to extracellular production of hydrogen peroxide to compete with other organisms through oxidative stress, or support the action of peroxidases and peroxygenases. In Ralstonia solanacearum (strain UW551), this protein is N-acetyl-D-hexosamine oxidase.